We begin with the raw amino-acid sequence, 28 residues long: Cytochrome c oxidase subunit 5B, mitochondrial (28 aa).

This sequence belongs to the cytochrome c oxidase subunit 5B family. As to quaternary structure, component of the cytochrome c oxidase (complex IV, CIV), a multisubunit enzyme composed of a catalytic core of 3 subunits and several supernumerary subunits. The complex exists as a monomer or a dimer and forms supercomplexes (SCs) in the inner mitochondrial membrane with ubiquinol-cytochrome c oxidoreductase (cytochrome b-c1 complex, complex III, CIII).

It localises to the mitochondrion inner membrane. The protein operates within energy metabolism; oxidative phosphorylation. In terms of biological role, component of the cytochrome c oxidase, the last enzyme in the mitochondrial electron transport chain which drives oxidative phosphorylation. The respiratory chain contains 3 multisubunit complexes succinate dehydrogenase (complex II, CII), ubiquinol-cytochrome c oxidoreductase (cytochrome b-c1 complex, complex III, CIII) and cytochrome c oxidase (complex IV, CIV), that cooperate to transfer electrons derived from NADH and succinate to molecular oxygen, creating an electrochemical gradient over the inner membrane that drives transmembrane transport and the ATP synthase. Cytochrome c oxidase is the component of the respiratory chain that catalyzes the reduction of oxygen to water. Electrons originating from reduced cytochrome c in the intermembrane space (IMS) are transferred via the dinuclear copper A center (CU(A)) of subunit 2 and heme A of subunit 1 to the active site in subunit 1, a binuclear center (BNC) formed by heme A3 and copper B (CU(B)). The BNC reduces molecular oxygen to 2 water molecules using 4 electrons from cytochrome c in the IMS and 4 protons from the mitochondrial matrix. This is Cytochrome c oxidase subunit 5B, mitochondrial from Solanum tuberosum (Potato).